The following is a 693-amino-acid chain: ATP-dependent DNA helicase RecG (693 aa).

Residues 48–146 are wedge domain; it reads THLYPIGELL…GDLSTPELQE (99 aa). In terms of domain architecture, Helicase ATP-binding spans 283–448; that stretch reads DMALDVPMMR…AYADLDTSVI (166 aa). Residue 296 to 303 participates in ATP binding; it reads GDVGSGKT. Positions 397–400 match the DEAH box motif; sequence DEQH. The region spanning 482-628 is the Helicase C-terminal domain; it reads EGRQAYWVCT…GFVIAQKDLE (147 aa).

It belongs to the helicase family. RecG subfamily. Monomer.

The enzyme catalyses Couples ATP hydrolysis with the unwinding of duplex DNA by translocating in the 3'-5' direction.. It carries out the reaction ATP + H2O = ADP + phosphate + H(+). Plays a critical role in recombination and DNA repair. Helps process Holliday junction intermediates to mature products by catalyzing branch migration. Has replication fork regression activity, unwinds stalled or blocked replication forks to make a HJ that can be resolved. Has a DNA unwinding activity characteristic of a DNA helicase with 3'-5' polarity. In terms of biological role, plays a role in recovery after DNA ADP-ribosylation. The chain is ATP-dependent DNA helicase RecG from Escherichia coli O127:H6 (strain E2348/69 / EPEC).